The sequence spans 535 residues: Growth factor receptor-bound protein 7 (535 aa).

The tract at residues 1–90 (MELDLSPTHL…PILGGSSGAR (90 aa)) is disordered. Over residues 21–37 (PATPPETPPPPDNPPPG) the composition is skewed to pro residues. The Ras-associating domain occupies 99–185 (RLCVVKVYSE…SRFIFRKNFA (87 aa)). Phosphotyrosine; by FAK1 is present on residues Tyr-187 and Tyr-341. Residues 228–341 (FPEIQGFLQL…WLAAFRLFKY (114 aa)) form the PH domain. Ser-364 bears the Phosphoserine mark. Residues 434 to 530 (WFHGRISREE…ILPCLLRHCC (97 aa)) form the SH2 domain.

Belongs to the GRB7/10/14 family. As to quaternary structure, homodimer. Interacts (via SH2 domain) with EGFR, ERBB2, ERBB3 (when phosphorylated), ERBB4 (when phosphorylated), EPHB1, INSR, FGFR1, PDGFRA (tyrosine phosphorylated) and PDGFRB (tyrosine phosphorylated). Interacts with SHC1. Interacts with RND1. Interacts (when tyrosine phosphorylated) with FHL2 and HAX1. Interacts (via SH2 domain) with RET and PTK2/FAK1. Interacts (when not phosphorylated) with ELAVL1. In stressed cells, but not in normal cells, part of a complex that contains at least GRB7, PTK2/FAK1, STAU1, ELAVL1 and TIA1. Interacts (via SH2 domain) with KIT (phosphorylated). Interacts (via SH2 domain) with TEK/TIE2 (tyrosine phosphorylated). In terms of processing, phosphorylated on serine and threonine residues in response to activation of receptor kinases. Phosphorylated on tyrosine residues by TEK/TIE2. Phosphorylated on tyrosine residues by PTK2/FAK1, and possibly also other kinases. Phosphorylation is enhanced by activation of receptor kinases. Tyrosine phosphorylation is essential for activation of down-stream protein kinases. Phosphorylated on tyrosine residues in response to NTN1 signaling. Phosphorylation promotes stress granule disassembly during recovery after cellular stress.

The protein resides in the cytoplasm. It is found in the cell projection. Its subcellular location is the cell junction. The protein localises to the focal adhesion. It localises to the cell membrane. The protein resides in the cytoplasmic granule. Functionally, adapter protein that interacts with the cytoplasmic domain of numerous receptor kinases and modulates down-stream signaling. Promotes activation of down-stream protein kinases, including STAT3, AKT1, MAPK1 and/or MAPK3. Promotes activation of HRAS. Plays a role in signal transduction in response to EGF. Plays a role in the regulation of cell proliferation and cell migration. Plays a role in the assembly and stability of RNA stress granules. Binds to the 5'UTR of target mRNA molecules and represses translation of target mRNA species, when not phosphorylated. Phosphorylation impairs RNA binding and promotes stress granule disassembly during recovery after cellular stress. The polypeptide is Growth factor receptor-bound protein 7 (Grb7) (Mus musculus (Mouse)).